A 146-amino-acid chain; its full sequence is uncharacterized protein (146 aa).

This is an uncharacterized protein from Escherichia coli (strain K12).